A 111-amino-acid polypeptide reads, in one-letter code: MEASAILRGARVSPQKARLVAAQVRGLSADSAVNLLRFSSKKAACLIKKVVESAIANAENNHGSNIDDLRINTIIVDEGRMLKRFMARAKGRSSRIVKRSSHITVVVGPAK.

It belongs to the universal ribosomal protein uL22 family. In terms of assembly, part of the 50S ribosomal subunit.

This protein binds specifically to 23S rRNA; its binding is stimulated by other ribosomal proteins, e.g. L4, L17, and L20. It is important during the early stages of 50S assembly. It makes multiple contacts with different domains of the 23S rRNA in the assembled 50S subunit and ribosome. In terms of biological role, the globular domain of the protein is located near the polypeptide exit tunnel on the outside of the subunit, while an extended beta-hairpin is found that lines the wall of the exit tunnel in the center of the 70S ribosome. This is Large ribosomal subunit protein uL22 from Xylella fastidiosa (strain M23).